Reading from the N-terminus, the 209-residue chain is Uracil phosphoribosyltransferase (209 aa).

Residues Arg-79, Arg-104, and 131 to 139 (DPMLATGGS) contribute to the 5-phospho-alpha-D-ribose 1-diphosphate site. Residues Ile-194 and 199 to 201 (GDA) contribute to the uracil site. Residue Asp-200 participates in 5-phospho-alpha-D-ribose 1-diphosphate binding.

It belongs to the UPRTase family. The cofactor is Mg(2+).

The catalysed reaction is UMP + diphosphate = 5-phospho-alpha-D-ribose 1-diphosphate + uracil. The protein operates within pyrimidine metabolism; UMP biosynthesis via salvage pathway; UMP from uracil: step 1/1. With respect to regulation, allosterically activated by GTP. Catalyzes the conversion of uracil and 5-phospho-alpha-D-ribose 1-diphosphate (PRPP) to UMP and diphosphate. The chain is Uracil phosphoribosyltransferase from Streptococcus agalactiae serotype III (strain NEM316).